Here is a 434-residue protein sequence, read N- to C-terminus: Glucose-1-phosphate adenylyltransferase (434 aa).

Alpha-D-glucose 1-phosphate-binding positions include Tyr112, Gly178, Glu193–Lys194, and Ser211.

Belongs to the bacterial/plant glucose-1-phosphate adenylyltransferase family. Homotetramer.

The catalysed reaction is alpha-D-glucose 1-phosphate + ATP + H(+) = ADP-alpha-D-glucose + diphosphate. It functions in the pathway glycan biosynthesis; glycogen biosynthesis. In terms of biological role, involved in the biosynthesis of ADP-glucose, a building block required for the elongation reactions to produce glycogen. Catalyzes the reaction between ATP and alpha-D-glucose 1-phosphate (G1P) to produce pyrophosphate and ADP-Glc. This is Glucose-1-phosphate adenylyltransferase from Mannheimia succiniciproducens (strain KCTC 0769BP / MBEL55E).